The sequence spans 338 residues: Phenylalanine--tRNA ligase alpha subunit (338 aa).

Residue glutamate 253 participates in Mg(2+) binding.

Belongs to the class-II aminoacyl-tRNA synthetase family. Phe-tRNA synthetase alpha subunit type 1 subfamily. Tetramer of two alpha and two beta subunits. Mg(2+) is required as a cofactor.

Its subcellular location is the cytoplasm. The enzyme catalyses tRNA(Phe) + L-phenylalanine + ATP = L-phenylalanyl-tRNA(Phe) + AMP + diphosphate + H(+). This is Phenylalanine--tRNA ligase alpha subunit from Geotalea uraniireducens (strain Rf4) (Geobacter uraniireducens).